The sequence spans 274 residues: Thiazole synthase (274 aa).

The Schiff-base intermediate with DXP role is filled by Lys111. 1-deoxy-D-xylulose 5-phosphate is bound by residues Gly172, 198 to 199, and 220 to 221; these read AG and NT.

It belongs to the ThiG family. Homotetramer. Forms heterodimers with either ThiH or ThiS.

It localises to the cytoplasm. It carries out the reaction [ThiS sulfur-carrier protein]-C-terminal-Gly-aminoethanethioate + 2-iminoacetate + 1-deoxy-D-xylulose 5-phosphate = [ThiS sulfur-carrier protein]-C-terminal Gly-Gly + 2-[(2R,5Z)-2-carboxy-4-methylthiazol-5(2H)-ylidene]ethyl phosphate + 2 H2O + H(+). It participates in cofactor biosynthesis; thiamine diphosphate biosynthesis. Catalyzes the rearrangement of 1-deoxy-D-xylulose 5-phosphate (DXP) to produce the thiazole phosphate moiety of thiamine. Sulfur is provided by the thiocarboxylate moiety of the carrier protein ThiS. In vitro, sulfur can be provided by H(2)S. The sequence is that of Thiazole synthase from Gloeobacter violaceus (strain ATCC 29082 / PCC 7421).